A 443-amino-acid polypeptide reads, in one-letter code: Probable cytosolic iron-sulfur protein assembly protein 1 (443 aa).

Disordered regions lie at residues 1–27 (MSDP…WQTA) and 95–124 (REEQ…DDDE). Residues 8 to 21 (TLSPLATLTPPSSS) show a composition bias toward low complexity. WD repeat units follow at residues 14–57 (TLTP…LLHS) and 61–103 (GHKR…GNED). Residues 113–124 (AEDEDGRDDDDE) show a composition bias toward acidic residues. 6 WD repeats span residues 135–174 (GHES…NFET), 180–219 (EHDG…WVQV), 221–248 (CIAG…KDFR), 255–294 (SEEQ…RAEN), 323–362 (VHER…QTPN), and 391–440 (AHSV…DPPQ).

Belongs to the WD repeat CIA1 family.

Functionally, essential component of the cytosolic iron-sulfur (Fe/S) protein assembly machinery. Required for the maturation of extramitochondrial Fe/S proteins. This is Probable cytosolic iron-sulfur protein assembly protein 1 from Phaeosphaeria nodorum (strain SN15 / ATCC MYA-4574 / FGSC 10173) (Glume blotch fungus).